A 136-amino-acid chain; its full sequence is Nucleoside diphosphate kinase (136 aa).

Positions 10, 58, 86, 92, 104, and 114 each coordinate ATP. Residue His117 is the Pros-phosphohistidine intermediate of the active site.

This sequence belongs to the NDK family. As to quaternary structure, homotetramer. Mg(2+) serves as cofactor.

Its subcellular location is the cytoplasm. The catalysed reaction is a 2'-deoxyribonucleoside 5'-diphosphate + ATP = a 2'-deoxyribonucleoside 5'-triphosphate + ADP. It carries out the reaction a ribonucleoside 5'-diphosphate + ATP = a ribonucleoside 5'-triphosphate + ADP. Functionally, major role in the synthesis of nucleoside triphosphates other than ATP. The ATP gamma phosphate is transferred to the NDP beta phosphate via a ping-pong mechanism, using a phosphorylated active-site intermediate. The protein is Nucleoside diphosphate kinase of Corynebacterium efficiens (strain DSM 44549 / YS-314 / AJ 12310 / JCM 11189 / NBRC 100395).